The chain runs to 157 residues: Transcription factor HES-2 (157 aa).

Residues 13 to 70 enclose the bHLH domain; it reads LRKNLKPLLEKRRRARINESLSQLKGLVLPLLGAETSRSSKLEKADILEMTVRFLQEQ. The 34-residue stretch at 86–119 folds into the Orange domain; it reads YLEGYRACLARLARVLPACSVLEPAVSARLLEHL. A disordered region spans residues 124–157; sequence VSDDSPSLTLPPAPAPAPSPPVPPPGSSGLWRPW. Residues 132–149 are compositionally biased toward pro residues; sequence TLPPAPAPAPSPPVPPPG. The short motif at 154-157 is the WRPW motif element; it reads WRPW.

Transcription repression requires formation of a complex with a corepressor protein of the Groucho/TLE family.

The protein localises to the nucleus. In terms of biological role, transcriptional repressor of genes that require a bHLH protein for their transcription. In Mus musculus (Mouse), this protein is Transcription factor HES-2 (Hes2).